We begin with the raw amino-acid sequence, 273 residues long: Large ribosomal subunit protein uL2 (273 aa).

The disordered stretch occupies residues 228-273; it reads VDHPHGGGEGKTSGGRHPVTPWGFPTKGKKTRKNKRTSKFIVKKRK. Residues 254–273 show a composition bias toward basic residues; the sequence is KGKKTRKNKRTSKFIVKKRK.

This sequence belongs to the universal ribosomal protein uL2 family. As to quaternary structure, part of the 50S ribosomal subunit. Forms a bridge to the 30S subunit in the 70S ribosome.

Its function is as follows. One of the primary rRNA binding proteins. Required for association of the 30S and 50S subunits to form the 70S ribosome, for tRNA binding and peptide bond formation. It has been suggested to have peptidyltransferase activity; this is somewhat controversial. Makes several contacts with the 16S rRNA in the 70S ribosome. The sequence is that of Large ribosomal subunit protein uL2 from Rickettsia canadensis (strain McKiel).